Reading from the N-terminus, the 81-residue chain is ATP synthase subunit c (81 aa).

2 helical membrane passes run 6–26 (ASAS…GPGI) and 57–77 (LAFM…LLFA).

The protein belongs to the ATPase C chain family. In terms of assembly, F-type ATPases have 2 components, F(1) - the catalytic core - and F(0) - the membrane proton channel. F(1) has five subunits: alpha(3), beta(3), gamma(1), delta(1), epsilon(1). F(0) has four main subunits: a(1), b(1), b'(1) and c(10-14). The alpha and beta chains form an alternating ring which encloses part of the gamma chain. F(1) is attached to F(0) by a central stalk formed by the gamma and epsilon chains, while a peripheral stalk is formed by the delta, b and b' chains.

It localises to the cellular thylakoid membrane. Functionally, f(1)F(0) ATP synthase produces ATP from ADP in the presence of a proton or sodium gradient. F-type ATPases consist of two structural domains, F(1) containing the extramembraneous catalytic core and F(0) containing the membrane proton channel, linked together by a central stalk and a peripheral stalk. During catalysis, ATP synthesis in the catalytic domain of F(1) is coupled via a rotary mechanism of the central stalk subunits to proton translocation. In terms of biological role, key component of the F(0) channel; it plays a direct role in translocation across the membrane. A homomeric c-ring of between 10-14 subunits forms the central stalk rotor element with the F(1) delta and epsilon subunits. This is ATP synthase subunit c from Gloeothece citriformis (strain PCC 7424) (Cyanothece sp. (strain PCC 7424)).